The sequence spans 351 residues: Photosystem II D2 protein (351 aa).

The helical transmembrane segment at 39-59 (TAYLAAGGWFTGTTFVTSWYT) threads the bilayer. His116 contacts chlorophyll a. The chain crosses the membrane as a helical span at residues 123–139 (GFCLRQFEIARLVGIRP). Gln128 and Asn141 together coordinate pheophytin a. The helical transmembrane segment at 151 to 164 (VFVSVFLLYPLGQA) threads the bilayer. His196 is a chlorophyll a binding site. Residues 206-226 (GALLCAIHGATVENTLFEDGD) traverse the membrane as a helical segment. The a plastoquinone site is built by His213 and Phe260. Residue His213 coordinates Fe cation. His267 is a Fe cation binding site. The chain crosses the membrane as a helical span at residues 277–293 (GLWTSSIGIVGLALNLR).

Belongs to the reaction center PufL/M/PsbA/D family. In terms of assembly, PSII is composed of 1 copy each of membrane proteins PsbA, PsbB, PsbC, PsbD, PsbE, PsbF, PsbH, PsbI, PsbJ, PsbK, PsbL, PsbM, PsbT, PsbX, PsbY, PsbZ, Psb30/Ycf12, at least 3 peripheral proteins of the oxygen-evolving complex and a large number of cofactors. It forms dimeric complexes. The cofactor is The D1/D2 heterodimer binds P680, chlorophylls that are the primary electron donor of PSII, and subsequent electron acceptors. It shares a non-heme iron and each subunit binds pheophytin, quinone, additional chlorophylls, carotenoids and lipids. There is also a Cl(-1) ion associated with D1 and D2, which is required for oxygen evolution. The PSII complex binds additional chlorophylls, carotenoids and specific lipids..

The protein resides in the plastid. It is found in the chloroplast thylakoid membrane. The catalysed reaction is 2 a plastoquinone + 4 hnu + 2 H2O = 2 a plastoquinol + O2. Functionally, photosystem II (PSII) is a light-driven water:plastoquinone oxidoreductase that uses light energy to abstract electrons from H(2)O, generating O(2) and a proton gradient subsequently used for ATP formation. It consists of a core antenna complex that captures photons, and an electron transfer chain that converts photonic excitation into a charge separation. The D1/D2 (PsbA/PsbD) reaction center heterodimer binds P680, the primary electron donor of PSII as well as several subsequent electron acceptors. D2 is needed for assembly of a stable PSII complex. The protein is Photosystem II D2 protein of Thalassiosira pseudonana (Marine diatom).